The sequence spans 143 residues: Putative pre-16S rRNA nuclease (143 aa).

The protein belongs to the YqgF nuclease family.

It localises to the cytoplasm. Its function is as follows. Could be a nuclease involved in processing of the 5'-end of pre-16S rRNA. The polypeptide is Putative pre-16S rRNA nuclease (Crocosphaera subtropica (strain ATCC 51142 / BH68) (Cyanothece sp. (strain ATCC 51142))).